A 259-amino-acid chain; its full sequence is Peptide methionine sulfoxide reductase (259 aa).

The segment at 66–90 is disordered; sequence TRTPADASMDQSSIAQGPDDDIPAP.

The protein belongs to the MsrA Met sulfoxide reductase family.

The catalysed reaction is L-methionyl-[protein] + [thioredoxin]-disulfide + H2O = L-methionyl-(S)-S-oxide-[protein] + [thioredoxin]-dithiol. It catalyses the reaction [thioredoxin]-disulfide + L-methionine + H2O = L-methionine (S)-S-oxide + [thioredoxin]-dithiol. Its function is as follows. Has an important function as a repair enzyme for proteins that have been inactivated by oxidation. Catalyzes the reversible oxidation-reduction of methionine sulfoxide in proteins to methionine. The chain is Peptide methionine sulfoxide reductase from Lactuca sativa (Garden lettuce).